The chain runs to 313 residues: Putative phosphoribosylaminoimidazole-succinocarboxamide synthase 2 (313 aa).

This sequence belongs to the SAICAR synthetase family.

It carries out the reaction 5-amino-1-(5-phospho-D-ribosyl)imidazole-4-carboxylate + L-aspartate + ATP = (2S)-2-[5-amino-1-(5-phospho-beta-D-ribosyl)imidazole-4-carboxamido]succinate + ADP + phosphate + 2 H(+). It participates in purine metabolism; IMP biosynthesis via de novo pathway; 5-amino-1-(5-phospho-D-ribosyl)imidazole-4-carboxamide from 5-amino-1-(5-phospho-D-ribosyl)imidazole-4-carboxylate: step 1/2. This chain is Putative phosphoribosylaminoimidazole-succinocarboxamide synthase 2 (purC2), found in Mesorhizobium japonicum (strain LMG 29417 / CECT 9101 / MAFF 303099) (Mesorhizobium loti (strain MAFF 303099)).